The following is a 293-amino-acid chain: Diaminopimelate epimerase (293 aa).

3 residues coordinate substrate: Asn15, Gln47, and Asn67. Catalysis depends on Cys76, which acts as the Proton donor. Substrate-binding positions include Gly77–Asn78, Asn163, Asn197, and Glu215–Arg216. Residue Cys224 is the Proton acceptor of the active site. Residue Gly225–Ser226 coordinates substrate.

Belongs to the diaminopimelate epimerase family. Homodimer.

The protein localises to the cytoplasm. It catalyses the reaction (2S,6S)-2,6-diaminopimelate = meso-2,6-diaminopimelate. It participates in amino-acid biosynthesis; L-lysine biosynthesis via DAP pathway; DL-2,6-diaminopimelate from LL-2,6-diaminopimelate: step 1/1. Functionally, catalyzes the stereoinversion of LL-2,6-diaminopimelate (L,L-DAP) to meso-diaminopimelate (meso-DAP), a precursor of L-lysine and an essential component of the bacterial peptidoglycan. This chain is Diaminopimelate epimerase, found in Chelativorans sp. (strain BNC1).